A 136-amino-acid polypeptide reads, in one-letter code: MLFSLLELVQWLGFAQLEIFLHIWALLVFTVLLALKADGFAPDMSWWNIFIPFFTADGLSTYFTTIVTVRLFQDGEKRQAVLRLFWILTILSLKFVFEMLLCQKLVEQSRELWFGLIMSPVFILLQLLMIRACRVN.

4 helical membrane-spanning segments follow: residues 14-34, 50-72, 81-101, and 112-132; these read FAQL…VLLA, FIPF…VRLF, VLRL…EMLL, and LWFG…MIRA.

It localises to the endoplasmic reticulum membrane. The protein resides in the endoplasmic reticulum-Golgi intermediate compartment. Involved in the regulation of cellular calcium homeotasis. May act as a regulator of STING-mediated inflammatory signaling in macrophages. The polypeptide is Transmembrane protein 203 (tmem203) (Xenopus tropicalis (Western clawed frog)).